Consider the following 329-residue polypeptide: Peroxidase 18 (329 aa).

A signal peptide spans 1–29 (MALQFFSCKPKYTFLSSLLLLLLLSSSVA). 4 disulfide bridges follow: C40-C116, C73-C78, C122-C325, and C201-C235. H71 (proton acceptor) is an active-site residue. Ca(2+)-binding residues include D72, V75, G77, D79, and S81. N87 is a glycosylation site (N-linked (GlcNAc...) asparagine). I164 serves as a coordination point for substrate. H194 contacts heme b. T195 is a Ca(2+) binding site. Residues D249, T252, and D257 each contribute to the Ca(2+) site.

This sequence belongs to the peroxidase family. Classical plant (class III) peroxidase subfamily. Heme b serves as cofactor. The cofactor is Ca(2+).

The protein localises to the secreted. The catalysed reaction is 2 a phenolic donor + H2O2 = 2 a phenolic radical donor + 2 H2O. Removal of H(2)O(2), oxidation of toxic reductants, biosynthesis and degradation of lignin, suberization, auxin catabolism, response to environmental stresses such as wounding, pathogen attack and oxidative stress. These functions might be dependent on each isozyme/isoform in each plant tissue. The protein is Peroxidase 18 (PER18) of Arabidopsis thaliana (Mouse-ear cress).